A 230-amino-acid polypeptide reads, in one-letter code: Acyl-protein thioesterase 1 (230 aa).

Residues S119, D174, and H208 each act as charge relay system in the active site. K224 carries the N6-acetyllysine modification.

Belongs to the AB hydrolase superfamily. AB hydrolase 2 family. As to quaternary structure, homodimer.

It localises to the cytoplasm. The protein localises to the cell membrane. Its subcellular location is the nucleus membrane. The protein resides in the endoplasmic reticulum. It carries out the reaction S-hexadecanoyl-L-cysteinyl-[protein] + H2O = L-cysteinyl-[protein] + hexadecanoate + H(+). The catalysed reaction is 1-hexadecanoyl-sn-glycero-3-phosphocholine + H2O = sn-glycerol 3-phosphocholine + hexadecanoate + H(+). It catalyses the reaction a 1-(9Z-octadecenoyl)-2-acyl-sn-glycero-3-phosphocholine + H2O = a 2-acyl-sn-glycero-3-phosphocholine + (9Z)-octadecenoate + H(+). In terms of biological role, acts as an acyl-protein thioesterase. Hydrolyzes fatty acids from S-acylated cysteine residues in proteins such as trimeric G alpha proteins or HRAS. Acts as a palmitoyl thioesterase that catalyzes depalmitoylation of proteins, such as ADRB2, KCNMA1 and SQSTM1. Acts as a negative regulator of autophagy by mediating palmitoylation of SQSTM1, decreasing affinity between SQSTM1 and ATG8 proteins and recruitment of ubiquitinated cargo proteins to autophagosomes. Acts as a lysophospholipase and hydrolyzes lysophosphatidylcholine (lyso-PC). Also hydrolyzes lysophosphatidylethanolamine (lyso-PE), lysophosphatidylinositol (lyso-PI) and lysophosphatidylserine (lyso-PS). Has much higher thioesterase activity than lysophospholipase activity. Contributes to the production of lysophosphatidic acid (LPA) during blood coagulation by recognizing and cleaving plasma phospholipids to generate lysophospholipids which in turn act as substrates for ENPP2 to produce LPA. This Mus musculus (Mouse) protein is Acyl-protein thioesterase 1 (Lypla1).